Here is a 365-residue protein sequence, read N- to C-terminus: Patr class I histocompatibility antigen, A-108 alpha chain (365 aa).

The first 24 residues, 1 to 24 (MAVMPPRTLLLLLSGALALTQTWA), serve as a signal peptide directing secretion. The segment at 25–114 (GSHSMRYFYT…LRGYYNQSED (90 aa)) is alpha-1. Topologically, residues 25-308 (GSHSMRYFYT…EPSSQPTIPI (284 aa)) are extracellular. An N-linked (GlcNAc...) asparagine glycan is attached at N110. The tract at residues 115 to 206 (GSHTIQIMYG…ENGKETLQRT (92 aa)) is alpha-2. Disulfide bonds link C125–C188 and C227–C283. The segment at 207–298 (DPPKTHMTHH…GLPKPLTLRW (92 aa)) is alpha-3. One can recognise an Ig-like C1-type domain in the interval 209–295 (PKTHMTHHPI…QHEGLPKPLT (87 aa)). The connecting peptide stretch occupies residues 299–308 (EPSSQPTIPI). Residues 309–332 (VGIIAGLVLLGAVITGAVVAAVMW) form a helical membrane-spanning segment. Residues 333 to 365 (RRKSSDRKGGSYTQAASSDSAQGSDVSLTACKV) are Cytoplasmic-facing. The tract at residues 339–360 (RKGGSYTQAASSDSAQGSDVSL) is disordered. S343 bears the Phosphoserine mark. Residue Y344 is modified to Phosphotyrosine. The segment covering 346-359 (QAASSDSAQGSDVS) has biased composition (low complexity). S349, S350, S352, S356, and S359 each carry phosphoserine.

The protein belongs to the MHC class I family. Heterodimer of an alpha chain and a beta chain (beta-2-microglobulin).

Its subcellular location is the membrane. Functionally, involved in the presentation of foreign antigens to the immune system. This is Patr class I histocompatibility antigen, A-108 alpha chain (Patr-A) from Pan troglodytes (Chimpanzee).